The primary structure comprises 61 residues: MPFVTIQFLEGRTDDQKKALVSEVTEVVAKNLKAPKENIHVILEEMKKTDYGVGGVRKSDI.

P2 acts as the Proton acceptor; via imino nitrogen in catalysis.

This sequence belongs to the 4-oxalocrotonate tautomerase family.

The polypeptide is Probable tautomerase LMOf2365_2536 (Listeria monocytogenes serotype 4b (strain F2365)).